Reading from the N-terminus, the 448-residue chain is Trigger factor (448 aa).

Residues 173 to 258 (SDRVTIDFVG…LKQIEWAHMP (86 aa)) form the PPIase FKBP-type domain.

It belongs to the FKBP-type PPIase family. Tig subfamily.

It is found in the cytoplasm. The enzyme catalyses [protein]-peptidylproline (omega=180) = [protein]-peptidylproline (omega=0). Its function is as follows. Involved in protein export. Acts as a chaperone by maintaining the newly synthesized protein in an open conformation. Functions as a peptidyl-prolyl cis-trans isomerase. This is Trigger factor from Herminiimonas arsenicoxydans.